Here is a 353-residue protein sequence, read N- to C-terminus: Melatonin receptor type 1A (353 aa).

Residues 1-32 lie on the Extracellular side of the membrane; the sequence is MKGNVSELLNATQQAPGGGEGGRPRPSWLAST. 2 N-linked (GlcNAc...) asparagine glycosylation sites follow: Asn4 and Asn10. The helical transmembrane segment at 33-53 threads the bilayer; the sequence is LAFILIFTIVVDILGNLLVIL. The Cytoplasmic portion of the chain corresponds to 54–66; the sequence is SVYRNKKLRNSGN. Residues 67-87 form a helical membrane-spanning segment; it reads IFVVSLAVADLVVAVYPYPLV. The Extracellular portion of the chain corresponds to 88–105; sequence LTSILNNGWNLGYLHCQV. A disulfide bridge connects residues Cys103 and Cys180. Residues 106–126 form a helical membrane-spanning segment; that stretch reads SAFLMGLSVIGSIFNITGIAM. The Cytoplasmic portion of the chain corresponds to 127-145; sequence NRYCYICHSLKYDKIYSNK. The chain crosses the membrane as a helical span at residues 146–166; the sequence is NSLCYVFLIWMLTLIAIMPNL. At 167–190 the chain is on the extracellular side; sequence QTGTLQYDPRIYSCTFTQSVSSAY. A helical transmembrane segment spans residues 191–211; that stretch reads TIAVVVFHFIVPMIIVIFCYL. Residues 212–243 lie on the Cytoplasmic side of the membrane; it reads RIWVLVLQVRRRVKPDNKPKLKPQDFRNFVTM. Residues 244 to 264 form a helical membrane-spanning segment; that stretch reads FVVFVLFAICWAPLNLIGLIV. Residues 265–277 are Extracellular-facing; that stretch reads ASDPATMVPRIPE. Residues 278-298 traverse the membrane as a helical segment; it reads WLFVASYYLAYFNSCLNAIIY. Over 299–353 the chain is Cytoplasmic; it reads GLLNQNFRKEYKKIIVSLCTAKMFFVESSNEEADKIKCKPSPLIPNNNLIKVDSV.

Belongs to the G-protein coupled receptor 1 family.

The protein localises to the cell membrane. High affinity receptor for melatonin. Likely to mediate the reproductive and circadian actions of melatonin. The activity of this receptor is mediated by pertussis toxin sensitive G proteins that inhibit adenylate cyclase activity. Possibly involved in sleep induction, by melatonin activation of the potassium channel KCNMA1/BK and the dissociation of G-beta and G-gamma subunits, thereby decreasing synaptic transmission. The protein is Melatonin receptor type 1A (Mtnr1a) of Mus musculus (Mouse).